The primary structure comprises 704 residues: MRSLFASTGRGLEELLKTELEHLGAQSCQITQGGVYFRADDKTMYQSLLWSRLASRIMLPLNEFNVYSDLDLYLGVQAIDWSEVFTVNHTFAIHFNGTNDVIRNSQYGALKAKDAIVDSFQRKIGQRPDVAKQSPDIRLTIHLHKEKASLSLDLSGDGLHQRGYRDLTGQAPLKENLAAAIIMRSGWKTDTPLIDPMCGSGTLLIEAAMMATDCAPALNRVHWGFRHWLGHNEALWKEVTHEAFARFREGKKNTQARFYGFDVDKRVLDMARANARRADVADLITFTQGDAAKLTNPVSTGVKGTIISNPPYGERLESEPALIALHSQLGRAVKAHFPGWRLSLFSASPELLSCIQLRAEREFKAKNGPLDCVQKNYLLSETPSTINTRLAEDFANRLRKNEKKLAKWAKQQQIECYRLYDADLPEYNVAVDRYGEKVVIQEYAPPKTINEHKARQRLFDVISATMEVLALRSDQLILKTRQRQKGKQQYEKMAEKGDFFLVDEFGAKFWVNLTDYLDTGLFLDHRIARKMLGEMSKGKDFLNLFAYTGSASVHAGLGGAKSTTTVDMSRTYLEWAEKNFQANGLSGRQHRLMQADCLQWLSQSNEQFDVIFIDPPTFSNSKRMENTFDVQRDHIELMKHLKRLLRKGGTIMFSNNKRGFKMDHEALANIGLTAKEITQKTLSQDFARNRQIHNCWLLNHAGEE.

Residues 43-154 (TMYQSLLWSR…KEKASLSLDL (112 aa)) form the THUMP domain.

It belongs to the methyltransferase superfamily. RlmKL family.

It is found in the cytoplasm. It carries out the reaction guanosine(2445) in 23S rRNA + S-adenosyl-L-methionine = N(2)-methylguanosine(2445) in 23S rRNA + S-adenosyl-L-homocysteine + H(+). The enzyme catalyses guanosine(2069) in 23S rRNA + S-adenosyl-L-methionine = N(2)-methylguanosine(2069) in 23S rRNA + S-adenosyl-L-homocysteine + H(+). Functionally, specifically methylates the guanine in position 2445 (m2G2445) and the guanine in position 2069 (m7G2069) of 23S rRNA. This Proteus mirabilis (strain HI4320) protein is Ribosomal RNA large subunit methyltransferase K/L.